Consider the following 484-residue polypeptide: TPR repeat-containing protein YvcD (484 aa).

TPR repeat units follow at residues 21–54, 55–88, and 187–220; these read GQYF…EPED, SEML…LEAE, and WSAY…NEGN.

The polypeptide is TPR repeat-containing protein YvcD (yvcD) (Bacillus subtilis (strain 168)).